The sequence spans 25 residues: Brevinin-2R (25 aa).

Cys19 and Cys25 are joined by a disulfide.

This sequence belongs to the frog skin active peptide (FSAP) family. Brevinin subfamily. As to expression, expressed by the skin glands.

It is found in the secreted. Functionally, cytotoxic to cancer cells, acts via the activation of the lysosomal-mitochondrial death pathway and autophagy-like cell death. Does not show significant hemolytic activity. This Pelophylax ridibundus (Marsh frog) protein is Brevinin-2R.